Reading from the N-terminus, the 64-residue chain is Large ribosomal subunit protein bL35 (64 aa).

The segment covering 22-31 (GKVKHGHAYR) has biased composition (basic residues). The tract at residues 22 to 64 (GKVKHGHAYRSHLAQSKTTKQKRQSRKSTLMNNSDFKRLKKLI) is disordered.

This sequence belongs to the bacterial ribosomal protein bL35 family.

In Mesomycoplasma hyopneumoniae (strain 232) (Mycoplasma hyopneumoniae), this protein is Large ribosomal subunit protein bL35.